We begin with the raw amino-acid sequence, 337 residues long: tRNA N6-adenosine threonylcarbamoyltransferase (337 aa).

Residues histidine 111 and histidine 115 each contribute to the Fe cation site. Residues 134–138 (LVSGG), aspartate 167, glycine 180, and asparagine 272 each bind substrate. Aspartate 300 serves as a coordination point for Fe cation.

This sequence belongs to the KAE1 / TsaD family. It depends on Fe(2+) as a cofactor.

The protein resides in the cytoplasm. It catalyses the reaction L-threonylcarbamoyladenylate + adenosine(37) in tRNA = N(6)-L-threonylcarbamoyladenosine(37) in tRNA + AMP + H(+). Its function is as follows. Required for the formation of a threonylcarbamoyl group on adenosine at position 37 (t(6)A37) in tRNAs that read codons beginning with adenine. Is involved in the transfer of the threonylcarbamoyl moiety of threonylcarbamoyl-AMP (TC-AMP) to the N6 group of A37, together with TsaE and TsaB. TsaD likely plays a direct catalytic role in this reaction. This Salmonella newport (strain SL254) protein is tRNA N6-adenosine threonylcarbamoyltransferase.